Here is a 323-residue protein sequence, read N- to C-terminus: Putative dTDP-D-glucose 4,6-dehydratase (323 aa).

Threonine 124 is a substrate binding site. Aspartate 125 functions as the Proton donor in the catalytic mechanism. Catalysis depends on proton acceptor residues glutamate 126 and tyrosine 149.

It belongs to the NAD(P)-dependent epimerase/dehydratase family. dTDP-glucose dehydratase subfamily. NAD(+) is required as a cofactor.

The enzyme catalyses dTDP-alpha-D-glucose = dTDP-4-dehydro-6-deoxy-alpha-D-glucose + H2O. This chain is Putative dTDP-D-glucose 4,6-dehydratase, found in Acanthamoeba polyphaga mimivirus (APMV).